Reading from the N-terminus, the 231-residue chain is Acyl-protein thioesterase 2 (231 aa).

Residue cysteine 2 is the site of S-palmitoyl cysteine attachment. Serine 82 is subject to Phosphoserine. Catalysis depends on charge relay system residues serine 122, aspartate 176, and histidine 210.

Belongs to the AB hydrolase superfamily. AB hydrolase 2 family. In terms of tissue distribution, expressed in various breast cancer cell lines.

The protein localises to the cytoplasm. The catalysed reaction is S-hexadecanoyl-L-cysteinyl-[protein] + H2O = L-cysteinyl-[protein] + hexadecanoate + H(+). It catalyses the reaction prostaglandin E2 1-glyceryl ester + H2O = prostaglandin E2 + glycerol + H(+). The enzyme catalyses 1-hexadecanoyl-sn-glycero-3-phosphocholine + H2O = sn-glycerol 3-phosphocholine + hexadecanoate + H(+). It carries out the reaction 1-octadecanoyl-sn-glycero-3-phosphocholine + H2O = octadecanoate + sn-glycerol 3-phosphocholine + H(+). The catalysed reaction is 1-hexadecanoyl-sn-glycero-3-phosphate + H2O = sn-glycerol 3-phosphate + hexadecanoate + H(+). It catalyses the reaction 1-hexadecanoyl-sn-glycero-3-phospho-L-serine + H2O = sn-glycero-3-phospho-L-serine + hexadecanoate + H(+). With respect to regulation, inhibited by compound 1 or (5,5-Dioxido-4H-thieno[3,2-c]thiochromen-2-yl)(4-(4-methoxyphenyl)piperazin-1-yl)methanone. Its function is as follows. Acts as an acyl-protein thioesterase hydrolyzing fatty acids from S-acylated cysteine residues in proteins such as trimeric G alpha proteins, GSDMD, GAP43, ZDHHC6 or HRAS. Deacylates GAP43. Mediates depalmitoylation of ZDHHC6. Has lysophospholipase activity. Hydrolyzes prostaglandin glycerol esters (PG-Gs) in the following order prostaglandin D2-glycerol ester (PGD2-G) &gt; prostaglandin E2 glycerol ester (PGE2-G) &gt; prostaglandin F2-alpha-glycerol ester (PGF2-alpha-G). Hydrolyzes 1-arachidonoylglycerol but not 2-arachidonoylglycerol or arachidonoylethanolamide. This chain is Acyl-protein thioesterase 2 (LYPLA2), found in Homo sapiens (Human).